The following is a 209-amino-acid chain: Redox-sensing transcriptional repressor Rex (209 aa).

Positions 16–55 (LYYRFIQNLSLSGKQRVSSAELSEAVKVDSATIRRDFSYF) form a DNA-binding region, H-T-H motif. NAD(+) is bound at residue 90–95 (GVGNLG).

It belongs to the transcriptional regulatory Rex family. In terms of assembly, homodimer.

Its subcellular location is the cytoplasm. In terms of biological role, modulates transcription in response to changes in cellular NADH/NAD(+) redox state. This is Redox-sensing transcriptional repressor Rex from Bacillus anthracis (strain A0248).